Consider the following 373-residue polypeptide: 8-amino-7-oxononanoate synthase (373 aa).

Position 16 (arginine 16) interacts with substrate. 93 to 94 is a pyridoxal 5'-phosphate binding site; sequence GF. A substrate-binding site is contributed by histidine 118. Pyridoxal 5'-phosphate contacts are provided by residues serine 165, 190 to 193, and 222 to 225; these read DEAH and TFSK. Lysine 225 carries the N6-(pyridoxal phosphate)lysine modification. A substrate-binding site is contributed by threonine 334.

This sequence belongs to the class-II pyridoxal-phosphate-dependent aminotransferase family. BioF subfamily. In terms of assembly, homodimer. Pyridoxal 5'-phosphate serves as cofactor.

It carries out the reaction 6-carboxyhexanoyl-[ACP] + L-alanine + H(+) = (8S)-8-amino-7-oxononanoate + holo-[ACP] + CO2. The protein operates within cofactor biosynthesis; biotin biosynthesis. Catalyzes the decarboxylative condensation of pimeloyl-[acyl-carrier protein] and L-alanine to produce 8-amino-7-oxononanoate (AON), [acyl-carrier protein], and carbon dioxide. This chain is 8-amino-7-oxononanoate synthase, found in Helicobacter pylori (strain J99 / ATCC 700824) (Campylobacter pylori J99).